Here is a 315-residue protein sequence, read N- to C-terminus: Ribosomal protein L11 methyltransferase (315 aa).

S-adenosyl-L-methionine contacts are provided by Thr163, Gly184, Asp206, and Asn248.

This sequence belongs to the methyltransferase superfamily. PrmA family.

The protein resides in the cytoplasm. The catalysed reaction is L-lysyl-[protein] + 3 S-adenosyl-L-methionine = N(6),N(6),N(6)-trimethyl-L-lysyl-[protein] + 3 S-adenosyl-L-homocysteine + 3 H(+). Its function is as follows. Methylates ribosomal protein L11. This chain is Ribosomal protein L11 methyltransferase, found in Lacticaseibacillus paracasei (strain ATCC 334 / BCRC 17002 / CCUG 31169 / CIP 107868 / KCTC 3260 / NRRL B-441) (Lactobacillus paracasei).